The primary structure comprises 1512 residues: Non-structural polyprotein 1AB (1512 aa).

5 consecutive transmembrane segments (helical) span residues Leu-190–Ala-210, Val-295–Ile-315, Ala-323–Phe-343, Ile-360–Val-380, and Ala-399–Thr-419. Active-site charge relay system; for serine protease activity residues include His-524, Asp-556, and Ser-621. Position 753 is an O-(5'-phospho-RNA)-tyrosine (Tyr-753). Residues Pro-940–Ala-981 are disordered. The span at Val-941–Val-961 shows a compositional bias: low complexity. The region spanning Thr-1257–Asp-1390 is the RdRp catalytic domain.

Belongs to the astroviridae polyprotein 1AB family. In terms of assembly, monomer. Post-translationally, cleaved by the viral and host proteases. The protease is probably autocatalytically cleaved.

Its subcellular location is the host membrane. It catalyses the reaction RNA(n) + a ribonucleoside 5'-triphosphate = RNA(n+1) + diphosphate. Functionally, responsible for the cleavage of the polyprotein into functional products. In terms of biological role, protein covalently attached to the 5' extremity of the genomic and subgenomic RNAs. It may serve as a primer for the replicase. This Gallus gallus (Chicken) protein is Non-structural polyprotein 1AB (ORF1).